Reading from the N-terminus, the 124-residue chain is Small ribosomal subunit protein uS12 (124 aa).

Residue aspartate 89 is modified to 3-methylthioaspartic acid. N6-acetyllysine is present on lysine 108.

This sequence belongs to the universal ribosomal protein uS12 family. As to quaternary structure, part of the 30S ribosomal subunit. Contacts proteins S8 and S17. May interact with IF1 in the 30S initiation complex.

With S4 and S5 plays an important role in translational accuracy. Functionally, interacts with and stabilizes bases of the 16S rRNA that are involved in tRNA selection in the A site and with the mRNA backbone. Located at the interface of the 30S and 50S subunits, it traverses the body of the 30S subunit contacting proteins on the other side and probably holding the rRNA structure together. The combined cluster of proteins S8, S12 and S17 appears to hold together the shoulder and platform of the 30S subunit. This Escherichia coli (strain K12 / MC4100 / BW2952) protein is Small ribosomal subunit protein uS12.